The following is an 85-amino-acid chain: Large ribosomal subunit protein bL31B (85 aa).

The protein belongs to the bacterial ribosomal protein bL31 family. Type B subfamily. As to quaternary structure, part of the 50S ribosomal subunit.

This is Large ribosomal subunit protein bL31B from Macrococcus caseolyticus (strain JCSC5402) (Macrococcoides caseolyticum).